Reading from the N-terminus, the 190-residue chain is Recombination protein RecR (190 aa).

Residues 58–73 (CEQCGALSENELCEIC) form a C4-type zinc finger. The Toprim domain occupies 81–167 (NILCIVESPK…TFSKIAQGIP (87 aa)).

This sequence belongs to the RecR family.

May play a role in DNA repair. It seems to be involved in an RecBC-independent recombinational process of DNA repair. It may act with RecF and RecO. The polypeptide is Recombination protein RecR (Campylobacter jejuni subsp. jejuni serotype O:23/36 (strain 81-176)).